The primary structure comprises 242 residues: uncharacterized protein (242 aa).

The first 17 residues, 1–17, serve as a signal peptide directing secretion; that stretch reads MKFSPAYLLAFAPIVAA. 5 N-linked (GlcNAc...) asparagine glycosylation sites follow: Asn-47, Asn-86, Asn-122, Asn-159, and Asn-178. Positions 176–214 are disordered; the sequence is NANESTADGQAQSGSSGSSSDSGSHSGHSSATQTSSTTA. A compositionally biased stretch (low complexity) spans 180 to 214; sequence STADGQAQSGSSGSSSDSGSHSGHSSATQTSSTTA. Ala-218 is lipidated: GPI-like-anchor amidated alanine. A propeptide spans 219 to 242 (removed in mature form); the sequence is GAVALETAAWGILGAAVVGGLAVL.

Post-translationally, the GPI-like anchor contains a phosphoceramide lipid group. The anchor position has not been determined.

The protein resides in the cell membrane. This is an uncharacterized protein from Aspergillus fumigatus (strain ATCC MYA-4609 / CBS 101355 / FGSC A1100 / Af293) (Neosartorya fumigata).